A 134-amino-acid polypeptide reads, in one-letter code: Histone H3-like centromeric protein A (134 aa).

Over residues Met1 to Pro14 the composition is skewed to basic residues. The interval Met1 to Arg34 is disordered. N,N,N-trimethylglycine is present on Gly2. Phosphoserine occurs at positions 16 and 22. The tract at residues Arg34–Leu48 is important for flexibility of DNA ends that protrude from nucleosomes. The tract at residues Arg35–Pro134 is H3-like. Ser62 carries the phosphoserine modification. Positions Cys69–Ala110 are CATD.

This sequence belongs to the histone H3 family. Component of centromeric nucleosomes, where DNA is wrapped around a histone octamer core. The octamer contains two molecules each of H2A, H2B, CENPA and H4 assembled in one CENPA-H4 heterotetramer and two H2A-H2B heterodimers. CENPA modulates the DNA-binding characteristics of nucleosomes so that protruding DNA ends have higher flexibility than in nucleosomes containing conventional histone H3. Inhibits binding of histone H1 to nucleosomes, since histone H1 binds preferentially to rigid DNA linkers that protrude from nucleosomes. Nucleosomes containing CENPA also contain histone H2A variants such as MACROH2A and H2A.Z/H2AZ1. The CENPA-H4 heterotetramer is more compact and structurally more rigid than corresponding H3-H4 heterotetramers. Can assemble into nucleosomes that contain both CENPA and histone H3.3; these nucleosomes interact with a single CENPC chain. Heterotrimer composed of HJURP, CENPA and histone H4, where HJURP interacts with the dimer formed by CENPA and histone H4 and prevents tetramerization of CENPA and H4. Component of the CENPA-NAC complex, at least composed of CENPA, CENPC, CENPH, CENPM, CENPN, CENPT and CENPU. Interacts (via CATD domain) with HJURP; the interaction is direct and is required for its localization to centromeres. Interacts with CENPC, CENPN and CENPT; interaction is direct. Part of a centromere complex consisting of CENPA, CENPT and CENPW. Identified in centromere complexes containing histones H2A, H2B and H4, and at least CENPA, CENPB, CENPC, CENPT, CENPN, HJURP, SUPT16H, SSRP1 and RSF1. Can self-associate. The CENPA-H4 heterotetramer can bind DNA by itself (in vitro). Interacts with CDK1, PPP1CA and RBBP7. Poly-ADP-ribosylated by PARP1. In terms of processing, trimethylated by NTMT1 at the N-terminal glycine after cleavage of Met-1. Methylation is low before incorporation into nucleosomes and increases with cell cycle progression, with the highest levels in mitotic nucleosomes. Post-translationally, phosphorylated by CDK1 at Ser-62 during early mitosis; this abolishes association with chromatin and centromeres, prevents interaction with HJURP and thereby prevents premature assembly of CENPA into centromeres. Dephosphorylated at Ser-62 by PPP1CA during late mitosis.

It is found in the nucleus. It localises to the chromosome. Its subcellular location is the centromere. Histone H3-like nucleosomal protein that is specifically found in centromeric nucleosomes. Replaces conventional H3 in the nucleosome core of centromeric chromatin that serves as an assembly site for the inner kinetochore. The presence of CENPA subtly modifies the nucleosome structure and the way DNA is wrapped around the nucleosome and gives rise to protruding DNA ends that are less well-ordered and rigid compared to nucleosomes containing histone H3. May serve as an epigenetic mark that propagates centromere identity through replication and cell division. Required for recruitment and assembly of kinetochore proteins, and as a consequence required for progress through mitosis, chromosome segregation and cytokinesis. This chain is Histone H3-like centromeric protein A (Cenpa), found in Mus musculus (Mouse).